The primary structure comprises 367 residues: Probable glutamine synthetase (367 aa).

In terms of domain architecture, GS beta-grasp spans isoleucine 30–methionine 110. The GS catalytic domain maps to histidine 117 to phenylalanine 367.

Belongs to the glutamine synthetase family. In terms of assembly, homooctamer.

It is found in the cytoplasm. It catalyses the reaction L-glutamate + NH4(+) + ATP = L-glutamine + ADP + phosphate + H(+). This chain is Probable glutamine synthetase (gln-2), found in Caenorhabditis elegans.